We begin with the raw amino-acid sequence, 253 residues long: Triosephosphate isomerase (253 aa).

9–11 contacts substrate; sequence NWK. H95 acts as the Electrophile in catalysis. E167 acts as the Proton acceptor in catalysis. Substrate-binding positions include G173, S213, and 234-235; that span reads GG. S213 is subject to Phosphoserine.

It belongs to the triosephosphate isomerase family. Homodimer.

The protein resides in the cytoplasm. The enzyme catalyses D-glyceraldehyde 3-phosphate = dihydroxyacetone phosphate. It participates in carbohydrate biosynthesis; gluconeogenesis. Its pathway is carbohydrate degradation; glycolysis; D-glyceraldehyde 3-phosphate from glycerone phosphate: step 1/1. Its function is as follows. Involved in the gluconeogenesis. Catalyzes stereospecifically the conversion of dihydroxyacetone phosphate (DHAP) to D-glyceraldehyde-3-phosphate (G3P). The sequence is that of Triosephosphate isomerase from Bacillus subtilis (strain 168).